Consider the following 61-residue polypeptide: Potassium channel toxin alpha-KTx 6.9 (61 aa).

Residues methionine 1–glycine 23 form the signal peptide. Cystine bridges form between cysteine 29–cysteine 50, cysteine 35–cysteine 55, cysteine 39–cysteine 57, and cysteine 45–cysteine 60.

This sequence belongs to the short scorpion toxin superfamily. Potassium channel inhibitor family. Alpha-KTx 06 subfamily. Expressed by the venom gland.

It localises to the secreted. Functionally, inhibits Kv1.2/KCNA2 and Kv1.3/KCNA3 voltage-gated potassium channels. In Opistophthalmus carinatus (African yellow leg scorpion), this protein is Potassium channel toxin alpha-KTx 6.9.